A 604-amino-acid chain; its full sequence is Probable translation initiation factor IF-2 (604 aa).

Residues 18 to 232 (IRTPIVCVLG…VLIGLAQRYM (215 aa)) form the tr-type G domain. The tract at residues 27-34 (GHVDHGKT) is G1. Residue 27 to 34 (GHVDHGKT) coordinates GTP. The G2 stretch occupies residues 52–56 (AITQH). A G3 region spans residues 88-91 (DTPG). Residues 88–92 (DTPGH) and 142–145 (TKLD) contribute to the GTP site. The interval 142–145 (TKLD) is G4. Residues 210–212 (SAH) form a G5 region.

The protein belongs to the TRAFAC class translation factor GTPase superfamily. Classic translation factor GTPase family. IF-2 subfamily.

Its function is as follows. Function in general translation initiation by promoting the binding of the formylmethionine-tRNA to ribosomes. Seems to function along with eIF-2. The chain is Probable translation initiation factor IF-2 from Methanospirillum hungatei JF-1 (strain ATCC 27890 / DSM 864 / NBRC 100397 / JF-1).